The primary structure comprises 255 residues: Type III pantothenate kinase (255 aa).

Position 6–13 (6–13 (DVGNTNTV)) interacts with ATP. Substrate-binding positions include Tyr100 and 107 to 110 (GADR). The active-site Proton acceptor is the Asp109. Position 129 (Asp129) interacts with K(+). Position 132 (Thr132) interacts with ATP. Residue Thr184 coordinates substrate.

This sequence belongs to the type III pantothenate kinase family. As to quaternary structure, homodimer. The cofactor is NH4(+). K(+) is required as a cofactor.

Its subcellular location is the cytoplasm. The catalysed reaction is (R)-pantothenate + ATP = (R)-4'-phosphopantothenate + ADP + H(+). It participates in cofactor biosynthesis; coenzyme A biosynthesis; CoA from (R)-pantothenate: step 1/5. Functionally, catalyzes the phosphorylation of pantothenate (Pan), the first step in CoA biosynthesis. The chain is Type III pantothenate kinase from Syntrophomonas wolfei subsp. wolfei (strain DSM 2245B / Goettingen).